A 145-amino-acid chain; its full sequence is UPF0260 protein VC_1058 (145 aa).

This sequence belongs to the UPF0260 family.

This is UPF0260 protein VC_1058 from Vibrio cholerae serotype O1 (strain ATCC 39315 / El Tor Inaba N16961).